We begin with the raw amino-acid sequence, 414 residues long: Gamma-glutamyl phosphate reductase (414 aa).

Belongs to the gamma-glutamyl phosphate reductase family.

It is found in the cytoplasm. It carries out the reaction L-glutamate 5-semialdehyde + phosphate + NADP(+) = L-glutamyl 5-phosphate + NADPH + H(+). It participates in amino-acid biosynthesis; L-proline biosynthesis; L-glutamate 5-semialdehyde from L-glutamate: step 2/2. In terms of biological role, catalyzes the NADPH-dependent reduction of L-glutamate 5-phosphate into L-glutamate 5-semialdehyde and phosphate. The product spontaneously undergoes cyclization to form 1-pyrroline-5-carboxylate. In Xanthomonas campestris pv. campestris (strain 8004), this protein is Gamma-glutamyl phosphate reductase.